The following is a 129-amino-acid chain: Phosphoribosyl-AMP cyclohydrolase (129 aa).

Mg(2+) is bound at residue Asp85. Cys86 contributes to the Zn(2+) binding site. 2 residues coordinate Mg(2+): Asp87 and Asp89. The Zn(2+) site is built by Cys102 and Cys109.

This sequence belongs to the PRA-CH family. In terms of assembly, homodimer. Requires Mg(2+) as cofactor. The cofactor is Zn(2+).

The protein localises to the cytoplasm. The catalysed reaction is 1-(5-phospho-beta-D-ribosyl)-5'-AMP + H2O = 1-(5-phospho-beta-D-ribosyl)-5-[(5-phospho-beta-D-ribosylamino)methylideneamino]imidazole-4-carboxamide. The protein operates within amino-acid biosynthesis; L-histidine biosynthesis; L-histidine from 5-phospho-alpha-D-ribose 1-diphosphate: step 3/9. Catalyzes the hydrolysis of the adenine ring of phosphoribosyl-AMP. This chain is Phosphoribosyl-AMP cyclohydrolase, found in Methanococcus maripaludis (strain C5 / ATCC BAA-1333).